A 288-amino-acid polypeptide reads, in one-letter code: Phosphatidate cytidylyltransferase (288 aa).

7 helical membrane passes run 10 to 30, 52 to 72, 89 to 109, 118 to 138, 152 to 172, 192 to 212, and 223 to 243; these read IVLI…YFAL, PLIR…WLYT, LLLI…ISYP, NPLL…AGVL, GLFL…GAYF, WEGV…FIHF, and ITGF…GDLT.

Belongs to the CDS family.

Its subcellular location is the cell inner membrane. The enzyme catalyses a 1,2-diacyl-sn-glycero-3-phosphate + CTP + H(+) = a CDP-1,2-diacyl-sn-glycerol + diphosphate. It functions in the pathway phospholipid metabolism; CDP-diacylglycerol biosynthesis; CDP-diacylglycerol from sn-glycerol 3-phosphate: step 3/3. This chain is Phosphatidate cytidylyltransferase (cdsA), found in Haemophilus influenzae (strain ATCC 51907 / DSM 11121 / KW20 / Rd).